The following is a 184-amino-acid chain: NADH-quinone oxidoreductase subunit B (184 aa).

Residues Cys37, Cys38, Cys103, and Cys132 each contribute to the [4Fe-4S] cluster site.

It belongs to the complex I 20 kDa subunit family. In terms of assembly, NDH-1 is composed of 14 different subunits. Subunits NuoB, C, D, E, F, and G constitute the peripheral sector of the complex. The cofactor is [4Fe-4S] cluster.

The protein localises to the cell membrane. The catalysed reaction is a quinone + NADH + 5 H(+)(in) = a quinol + NAD(+) + 4 H(+)(out). In terms of biological role, NDH-1 shuttles electrons from NADH, via FMN and iron-sulfur (Fe-S) centers, to quinones in the respiratory chain. The immediate electron acceptor for the enzyme in this species is believed to be a menaquinone. Couples the redox reaction to proton translocation (for every two electrons transferred, four hydrogen ions are translocated across the cytoplasmic membrane), and thus conserves the redox energy in a proton gradient. This chain is NADH-quinone oxidoreductase subunit B, found in Rhodococcus opacus (strain B4).